Reading from the N-terminus, the 253-residue chain is CD151 antigen (253 aa).

The Cytoplasmic portion of the chain corresponds to 1–18 (MGEFNEKKATCGTVCLKY). Residues cysteine 11 and cysteine 15 are each lipidated (S-palmitoyl cysteine). A helical membrane pass occupies residues 19 to 39 (LLFTYNCCFWLAGLAVMAVGI). Topologically, residues 40-57 (WTLALKSDYISLLASSTY) are extracellular. Residues 58–78 (LATAYILVVAGVVVMVTGVLG) form a helical membrane-spanning segment. The Cytoplasmic segment spans residues 79 to 91 (CCATFKERRNLLR). The chain crosses the membrane as a helical span at residues 92-112 (LYFILLLIIFLLEIIAGILAY). Residues 113 to 221 (VYYQQLNTEL…LESFIQEHLR (109 aa)) lie on the Extracellular side of the membrane. A glycan (N-linked (GlcNAc...) asparagine) is linked at asparagine 159. The chain crosses the membrane as a helical span at residues 222–242 (VIGAVGIGIACVQVFGMIFTC). Residues cysteine 242 and cysteine 243 are each lipidated (S-palmitoyl cysteine). Residues 243-253 (CLYRSLKLEHY) lie on the Cytoplasmic side of the membrane.

This sequence belongs to the tetraspanin (TM4SF) family. Interacts with integrins ITGA3:ITGB1, ITGA5:ITGB1, ITGA3:ITGB1 and ITGA6:ITGB4 and with CD9 and CD181. Interacts (via the second extracellular domain) with integrin ITGAV:ITGB3. Interacts with ITGA3; this interaction modulates ITGA3 glycosylation pattern. Interacts with F11R. Interacts with RAC1 and CDC42; these interactions mediate physical association of RAC1 and CDC42 with integrin adhesion receptor complexes. In terms of processing, palmitoylated. Palmitoylation by ZDHHC2 regulates CD151 expression, association with other tetraspanin family proteins and function in cell adhesion. Post-translationally, ubiquitinated by RNF128 on lysine residues present in the tetraspanin amino terminus via 'Lys-48'-linked ubiquitin leading to proteasomal degradation.

It localises to the cell membrane. In terms of biological role, structural component of specialized membrane microdomains known as tetraspanin-enriched microdomains (TERMs), which act as platforms for receptor clustering and signaling. Plays a role in various cellular and molecular mechanism through its association with both integrin and non-integrin proteins. These interactions facilitate critical cellular functions, including cell-to-cell communication, wound healing, platelet aggregation, trafficking, cell motility, and angiogenesis. Via interaction with JAM-A/F11R and integrin ITGA3:ITGB1, promotes the recruitment of signaling molecules such as RAC1, CDC42 and RhoGTPases to facilitate the polarization of epithelial cells and the reorganization of the actin cytoskeleton, which are critical steps in cell migration process. Regulates the glycosylation pattern of ITGA3:ITGB1 thereby modulating its activity. Plays an essential role in the maintenance of central laminin-binding integrin ITGA6:ITGB4-containing adhesion complexes. Essential for the proper assembly of the glomerular and tubular basement membranes in kidney. Contributes to T-cell activation by modulating integrin signaling leading to activation of downstream targets PTK2 and MAPK1/MAPK3. This is CD151 antigen (Cd151) from Rattus norvegicus (Rat).